A 426-amino-acid polypeptide reads, in one-letter code: uncharacterized protein (426 aa).

The protein belongs to the serpin family.

This is an uncharacterized protein from Methanosarcina mazei (strain ATCC BAA-159 / DSM 3647 / Goe1 / Go1 / JCM 11833 / OCM 88) (Methanosarcina frisia).